The sequence spans 787 residues: Exocyst complex component SEC15B (787 aa).

It belongs to the SEC15 family. In terms of assembly, the exocyst complex is composed of SEC3, SEC5, SEC6, SEC8, SEC10, EXO70A1 and EXO84B. Interacts with EXO84B. Binds to EXO70H1 AND EXO70B2. Binds directly to B1L.

Its subcellular location is the cytoplasm. The protein localises to the cytosol. The protein resides in the cytoskeleton. It is found in the phragmoplast. It localises to the secreted. Its subcellular location is the cell wall. The protein localises to the extracellular exosome. Component of the exocyst complex involved in the docking of exocytic vesicles with fusion sites on the plasma membrane during regulated or polarized secretion. Involved in polarized cell growth and organ morphogenesis. During cytokinesis, involved in cell plate initiation, cell plate maturation and formation of new primary cell wall. The polypeptide is Exocyst complex component SEC15B (Arabidopsis thaliana (Mouse-ear cress)).